We begin with the raw amino-acid sequence, 409 residues long: Multifunctional CCA protein (409 aa).

ATP is bound by residues glycine 8 and arginine 11. 2 residues coordinate CTP: glycine 8 and arginine 11. Residues aspartate 21 and aspartate 23 each coordinate Mg(2+). 3 residues coordinate ATP: arginine 91, arginine 137, and arginine 140. The CTP site is built by arginine 91, arginine 137, and arginine 140. The 102-residue stretch at 228–329 folds into the HD domain; sequence SGLHTLSVLE…LELLQSFDVY (102 aa).

The protein belongs to the tRNA nucleotidyltransferase/poly(A) polymerase family. Bacterial CCA-adding enzyme type 1 subfamily. In terms of assembly, monomer. Can also form homodimers and oligomers. Mg(2+) serves as cofactor. Ni(2+) is required as a cofactor.

The enzyme catalyses a tRNA precursor + 2 CTP + ATP = a tRNA with a 3' CCA end + 3 diphosphate. It carries out the reaction a tRNA with a 3' CCA end + 2 CTP + ATP = a tRNA with a 3' CCACCA end + 3 diphosphate. Functionally, catalyzes the addition and repair of the essential 3'-terminal CCA sequence in tRNAs without using a nucleic acid template. Adds these three nucleotides in the order of C, C, and A to the tRNA nucleotide-73, using CTP and ATP as substrates and producing inorganic pyrophosphate. tRNA 3'-terminal CCA addition is required both for tRNA processing and repair. Also involved in tRNA surveillance by mediating tandem CCA addition to generate a CCACCA at the 3' terminus of unstable tRNAs. While stable tRNAs receive only 3'-terminal CCA, unstable tRNAs are marked with CCACCA and rapidly degraded. The sequence is that of Multifunctional CCA protein from Pseudomonas fluorescens (strain Pf0-1).